The chain runs to 436 residues: uncharacterized protein (436 aa).

The N-terminal stretch at 1–19 is a signal peptide; the sequence is MKKLLLASIIGLASTTSFA.

This is an uncharacterized protein from Rickettsia bellii (strain RML369-C).